A 95-amino-acid polypeptide reads, in one-letter code: Aspartyl/glutamyl-tRNA(Asn/Gln) amidotransferase subunit C (95 aa).

This sequence belongs to the GatC family. Heterotrimer of A, B and C subunits.

It catalyses the reaction L-glutamyl-tRNA(Gln) + L-glutamine + ATP + H2O = L-glutaminyl-tRNA(Gln) + L-glutamate + ADP + phosphate + H(+). The catalysed reaction is L-aspartyl-tRNA(Asn) + L-glutamine + ATP + H2O = L-asparaginyl-tRNA(Asn) + L-glutamate + ADP + phosphate + 2 H(+). Its function is as follows. Allows the formation of correctly charged Asn-tRNA(Asn) or Gln-tRNA(Gln) through the transamidation of misacylated Asp-tRNA(Asn) or Glu-tRNA(Gln) in organisms which lack either or both of asparaginyl-tRNA or glutaminyl-tRNA synthetases. The reaction takes place in the presence of glutamine and ATP through an activated phospho-Asp-tRNA(Asn) or phospho-Glu-tRNA(Gln). The chain is Aspartyl/glutamyl-tRNA(Asn/Gln) amidotransferase subunit C from Pseudomonas putida (strain ATCC 700007 / DSM 6899 / JCM 31910 / BCRC 17059 / LMG 24140 / F1).